The chain runs to 89 residues: Large ribosomal subunit protein bL27 (89 aa).

Positions M1 to F26 are disordered.

The protein belongs to the bacterial ribosomal protein bL27 family.

This Desulfovibrio desulfuricans (strain ATCC 27774 / DSM 6949 / MB) protein is Large ribosomal subunit protein bL27.